An 80-amino-acid chain; its full sequence is Defensin coprisin (80 aa).

The N-terminal stretch at 1–20 (MAKLIAFALVASLCLSMVLC) is a signal peptide. Positions 21-37 (NPLPEEVQEEGLVRQKR) are excised as a propeptide. Intrachain disulfides connect cysteine 40-cysteine 71, cysteine 57-cysteine 76, and cysteine 61-cysteine 78.

Belongs to the invertebrate defensin family. Type 1 subfamily.

Its subcellular location is the secreted. The protein localises to the target cell membrane. Functionally, potent broad-spectrum antibacterial peptide against both Gram-positive (B.subtilis, S.epidermidis, and S.aureus) and Gram-negative bacteria (E.coli, S.typhimurium, and P.aeruginosa). Is also active against all antibiotic-resistant bacterial strains tested. Induces apoptosis in C.albicans, but does not disrupt the fungal plasma membrane at all. Acts by permeabilizing the bacterial cell membrane, but not human membranes. Also shows potent anti-inflammatory activities, since it reduces both LPS-induced nitric oxide release and pro-inflammatory cytokine production. Anti-inflammatory activities are initiated by suppressing the binding of LPS to toll-like receptor 4 (TLR4), and subsequently inhibiting the phosphorylation of p38 mitogen-activated protein kinase (MAPK) and nuclear translocation of NF-kB (TNFRSF11A). Does not show hemolytic activity against human erythrocytes. In Copris tripartitus (Dung beetle), this protein is Defensin coprisin.